The sequence spans 320 residues: Methionyl-tRNA formyltransferase (320 aa).

112–115 (SILP) provides a ligand contact to (6S)-5,6,7,8-tetrahydrofolate.

This sequence belongs to the Fmt family.

It catalyses the reaction L-methionyl-tRNA(fMet) + (6R)-10-formyltetrahydrofolate = N-formyl-L-methionyl-tRNA(fMet) + (6S)-5,6,7,8-tetrahydrofolate + H(+). Functionally, attaches a formyl group to the free amino group of methionyl-tRNA(fMet). The formyl group appears to play a dual role in the initiator identity of N-formylmethionyl-tRNA by promoting its recognition by IF2 and preventing the misappropriation of this tRNA by the elongation apparatus. This chain is Methionyl-tRNA formyltransferase, found in Shewanella woodyi (strain ATCC 51908 / MS32).